The primary structure comprises 260 residues: Hydroxyethylthiazole kinase 1 (260 aa).

A substrate-binding site is contributed by methionine 39. The ATP site is built by arginine 115 and threonine 160. Glycine 187 contributes to the substrate binding site.

It belongs to the Thz kinase family. It depends on Mg(2+) as a cofactor.

It catalyses the reaction 5-(2-hydroxyethyl)-4-methylthiazole + ATP = 4-methyl-5-(2-phosphooxyethyl)-thiazole + ADP + H(+). Its pathway is cofactor biosynthesis; thiamine diphosphate biosynthesis; 4-methyl-5-(2-phosphoethyl)-thiazole from 5-(2-hydroxyethyl)-4-methylthiazole: step 1/1. Functionally, catalyzes the phosphorylation of the hydroxyl group of 4-methyl-5-beta-hydroxyethylthiazole (THZ). This chain is Hydroxyethylthiazole kinase 1, found in Streptococcus pneumoniae (strain ATCC 700669 / Spain 23F-1).